Here is a 354-residue protein sequence, read N- to C-terminus: Rhodopsin (354 aa).

Topologically, residues 1–36 (MNGTEGENFYIPMSNKTGVVRSPFDYPQYYLAEPWK) are extracellular. Residues N2 and N15 are each glycosylated (N-linked (GlcNAc...) asparagine). The chain crosses the membrane as a helical span at residues 37–61 (FSVLAAYMFFLIIAGFPVNFLTLYV). The Cytoplasmic segment spans residues 62–73 (TIQHKKLRQPLN). A helical transmembrane segment spans residues 74 to 96 (YILLNLAVADLFMIFGGFPSTMI). The Extracellular segment spans residues 97–110 (TSMNGYFVFGPSGC). The cysteines at positions 110 and 187 are disulfide-linked. A helical transmembrane segment spans residues 111 to 133 (NFEGFFATLGGEIGLWSLVVLAI). The 'Ionic lock' involved in activated form stabilization signature appears at 134–136 (ERY). The Cytoplasmic segment spans residues 134–152 (ERYVVVCKPMSNFRFGSQH). The helical transmembrane segment at 153–173 (AFMGVGLTWIMAMACAFPPLV) threads the bilayer. At 174–202 (GWSRYIPEGMQCSCGIDYYTLKPEVNNES) the chain is on the extracellular side. N200 is a glycosylation site (N-linked (GlcNAc...) asparagine). Residues 203-224 (FVIYMFVVHFSIPLTIIFFCYG) form a helical membrane-spanning segment. At 225 to 252 (RLVCTVKEAAAQQQESETTQRAEREVTR) the chain is on the cytoplasmic side. A helical membrane pass occupies residues 253-274 (MVIIMVIAFLICWLPYASVAFF). At 275–286 (IFCNQGSEFGPI) the chain is on the extracellular side. A helical membrane pass occupies residues 287 to 308 (FMTIPAFFAKAASLYNPLIYIL). The residue at position 296 (K296) is an N6-(retinylidene)lysine. Topologically, residues 309-354 (MNKQFRNCMITTICCGKNPFEEEESTSASASKTEASSVSSSQVAPA) are cytoplasmic. Residues C322 and C323 are each lipidated (S-palmitoyl cysteine). Positions 333–354 (STSASASKTEASSVSSSQVAPA) are disordered. The segment covering 334 to 354 (TSASASKTEASSVSSSQVAPA) has biased composition (low complexity).

It belongs to the G-protein coupled receptor 1 family. Opsin subfamily. In terms of processing, phosphorylated on some or all of the serine and threonine residues present in the C-terminal region. Post-translationally, contains one covalently linked retinal chromophore.

It localises to the membrane. It is found in the cell projection. The protein resides in the cilium. The protein localises to the photoreceptor outer segment. Its function is as follows. Photoreceptor required for image-forming vision at low light intensity. While most salt water fish species use retinal as chromophore, most freshwater fish use 3-dehydroretinal, or a mixture of retinal and 3-dehydroretinal. Light-induced isomerization of 11-cis to all-trans retinal triggers a conformational change that activates signaling via G-proteins. Subsequent receptor phosphorylation mediates displacement of the bound G-protein alpha subunit by arrestin and terminates signaling. In Scyliorhinus canicula (Small-spotted catshark), this protein is Rhodopsin (rho).